The primary structure comprises 707 residues: Solute carrier family 15 member 1 (707 aa).

The chain crosses the membrane as a helical span at residues 1-21; the sequence is MGMSKSLSCFGYPLSIFFIVV. At 22–53 the chain is on the extracellular side; the sequence is NEFCERFSYYGMRALLILYFRNFIGWDDNLST. N-linked (GlcNAc...) asparagine glycosylation is present at Asn-50. Residues 54–74 traverse the membrane as a helical segment; the sequence is VIYHTFVALCYLTPILGALIA. Over 75–82 the chain is Cytoplasmic; it reads DAWLGKFK. Residues 83–103 form a helical membrane-spanning segment; sequence TIVWLSIVYTIGQAVTSLSSV. Topologically, residues 104–118 are extracellular; the sequence is NELTDNNHDGTPDSL. A helical membrane pass occupies residues 119–139; it reads PVHVAVCMIGLLLIALGTGGI. Residues 140-161 lie on the Cytoplasmic side of the membrane; that stretch reads KPCVSAFGGDQFEEGQEKQRNR. A helical membrane pass occupies residues 162–182; that stretch reads FFSIFYLAINAGSLLSTIITP. The Extracellular segment spans residues 183-198; sequence MVRVQQCGIHVKQACY. Residues 199 to 219 form a helical membrane-spanning segment; that stretch reads PLAFGIPAILMAVSLIVFIIG. The Cytoplasmic portion of the chain corresponds to 220–276; that stretch reads SGMYKKFKPQGNILSKVVKCICFAIKNRFRHRSKQFPKRAHWLDWAKEKYDERLIAQ. A helical membrane pass occupies residues 277–297; that stretch reads IKMVTRVLFLYIPLPMFWALF. Over 298-327 the chain is Extracellular; it reads DQQGSRWTLQATTMSGRIGILEIQPDQMQT. Residues 328–348 traverse the membrane as a helical segment; it reads VNTILIIILVPIMDAVVYPLI. The Cytoplasmic segment spans residues 349–361; the sequence is AKCGLNFTSLKKM. The helical transmembrane segment at 362–382 threads the bilayer; that stretch reads TIGMFLASMAFVAAAILQVEI. The Extracellular portion of the chain corresponds to 383–583; the sequence is DKTLPVFPKA…PPNTMNMAWQ (201 aa). Residues 383–583 are extracellular domain (ECD); the sequence is DKTLPVFPKA…PPNTMNMAWQ (201 aa). Asn-439, Asn-498, and Asn-513 each carry an N-linked (GlcNAc...) asparagine glycan. The chain crosses the membrane as a helical span at residues 584–604; the sequence is IPQYFLITSGEVVFSITGLEF. The Cytoplasmic segment spans residues 605 to 618; sequence SYSQAPSNMKSVLQ. A helical membrane pass occupies residues 619-639; the sequence is AGWLLTVAVGNIIVLIVAGAG. The Extracellular segment spans residues 640–644; the sequence is QINKQ. A helical membrane pass occupies residues 645–665; it reads WAEYILFAALLLVVCVIFAIM. At 666–707 the chain is on the cytoplasmic side; sequence ARFYTYVNPAEIEAQFEEDEKKKNPEKNDLYPSLAPVSQTQM. The interval 682–707 is disordered; the sequence is EEDEKKKNPEKNDLYPSLAPVSQTQM. The span at 684–694 shows a compositional bias: basic and acidic residues; that stretch reads DEKKKNPEKND.

It belongs to the major facilitator superfamily. Proton-dependent oligopeptide transporter (POT/PTR) (TC 2.A.17) family. Interacts (via extracellular domain region) with trypsin. Intestine, kidney, liver and low in brain.

Its subcellular location is the apical cell membrane. The catalysed reaction is a dipeptide(out) + H(+)(out) = a dipeptide(in) + H(+)(in). It catalyses the reaction an L-amino acid tripeptide(out) + H(+)(out) = an L-amino acid tripeptide(in) + H(+)(in). The enzyme catalyses L-alanyl-L-lysine(out) + H(+)(out) = L-alanyl-L-lysine(in) + H(+)(in). It carries out the reaction L-alanyl-L-proline(out) + H(+)(out) = L-alanyl-L-proline(in) + H(+)(in). The catalysed reaction is L-alanyl-L-valine(out) + H(+)(out) = L-alanyl-L-valine(in) + H(+)(in). It catalyses the reaction carnosine(out) + H(+)(out) = carnosine(in) + H(+)(in). The enzyme catalyses glycyl-L-glutamine(out) + H(+)(out) = glycyl-L-glutamine(in) + H(+)(in). It carries out the reaction glycyl-L-leucine(out) + H(+)(out) = glycyl-L-leucine(in) + H(+)(in). The catalysed reaction is glycyl-L-proline(out) + H(+)(out) = glycyl-L-proline(in) + H(+)(in). It catalyses the reaction glycyl-sarcosine(out) + H(+)(out) = glycyl-sarcosine(in) + H(+)(in). The enzyme catalyses L-leucyl-L-leucine(out) + H(+)(out) = L-leucyl-L-leucine(in) + H(+)(in). It carries out the reaction L-leucyl-L-proline(out) + H(+)(out) = L-leucyl-L-proline(in) + H(+)(in). The catalysed reaction is L-phenylalanyl-L-leucine(out) + H(+)(out) = L-phenylalanyl-L-leucine(in) + H(+)(in). It catalyses the reaction L-phenylalanyl-L-phenylalanine(out) + H(+)(out) = L-phenylalanyl-L-phenylalanine(in) + H(+)(in). The enzyme catalyses L-lysyl-glycine(out) + H(+)(out) = L-lysyl-glycine(in) + H(+)(in). It carries out the reaction L-tyrosylglycine(out) + H(+)(out) = L-tyrosylglycine(in) + H(+)(in). The catalysed reaction is L-alanyl-L-aspartate(out) + 2 H(+)(out) = L-alanyl-L-aspartate(in) + 2 H(+)(in). It catalyses the reaction L-aspartyl-glycine(out) + 2 H(+)(out) = L-aspartyl-glycine(in) + 2 H(+)(in). The enzyme catalyses glycyl-L-aspartate(out) + 2 H(+)(out) = glycyl-L-aspartate(in) + 2 H(+)(in). It carries out the reaction glycyl-L-glutamate(out) + 2 H(+)(out) = glycyl-L-glutamate(in) + 2 H(+)(in). The catalysed reaction is L-alanyl-L-leucyl-L-alanine(out) + H(+)(out) = L-alanyl-L-leucyl-L-alanine(in) + H(+)(in). It catalyses the reaction L-alanyl-L-prolylglycine(out) + H(+)(out) = L-alanyl-L-prolylglycine(in) + H(+)(in). The enzyme catalyses glycylglycyl-L-isoleucine(out) + H(+)(out) = glycylglycyl-L-isoleucine(in) + H(+)(in). It carries out the reaction glycylglycyl-L-proline(out) + H(+)(out) = glycylglycyl-L-proline(in) + H(+)(in). The catalysed reaction is L-methionyl-L-phenylalanyl-L-methionine(out) + H(+)(out) = L-methionyl-L-phenylalanyl-L-methionine(in) + H(+)(in). It catalyses the reaction N-acetyl-D-muramoyl-L-alanyl-D-isoglutamine(out) + 2 H(+)(out) = N-acetyl-D-muramoyl-L-alanyl-D-isoglutamine(in) + 2 H(+)(in). The enzyme catalyses N(alpha)-formyl-L-methionyl-L-leucyl-L-phenylalanine(out) + 2 H(+)(out) = N(alpha)-formyl-L-methionyl-L-leucyl-L-phenylalanine(in) + 2 H(+)(in). Electrogenic proton-coupled amino-acid transporter that transports oligopeptides of 2 to 4 amino acids with a preference for dipeptides. Transports neutral and monovalently charged peptides with a proton to peptide stoichiometry of 1:1 or 2:1. Primarily responsible for the absorption of dietary di- and tripeptides from the small intestinal lumen. Mediates transepithelial transport of muramyl and N-formylated bacterial dipeptides contributing to recognition of pathogenic bacteria by the mucosal immune system. The sequence is that of Solute carrier family 15 member 1 (SLC15A1) from Oryctolagus cuniculus (Rabbit).